A 368-amino-acid polypeptide reads, in one-letter code: UDP-N-acetylglucosamine--N-acetylmuramyl-(pentapeptide) pyrophosphoryl-undecaprenol N-acetylglucosamine transferase (368 aa).

Residues Thr10–Gly12, Asn128, Arg170, Ser199, Ile250, and Gln295 each bind UDP-N-acetyl-alpha-D-glucosamine.

The protein belongs to the glycosyltransferase 28 family. MurG subfamily.

It is found in the cell inner membrane. It catalyses the reaction di-trans,octa-cis-undecaprenyl diphospho-N-acetyl-alpha-D-muramoyl-L-alanyl-D-glutamyl-meso-2,6-diaminopimeloyl-D-alanyl-D-alanine + UDP-N-acetyl-alpha-D-glucosamine = di-trans,octa-cis-undecaprenyl diphospho-[N-acetyl-alpha-D-glucosaminyl-(1-&gt;4)]-N-acetyl-alpha-D-muramoyl-L-alanyl-D-glutamyl-meso-2,6-diaminopimeloyl-D-alanyl-D-alanine + UDP + H(+). The protein operates within cell wall biogenesis; peptidoglycan biosynthesis. In terms of biological role, cell wall formation. Catalyzes the transfer of a GlcNAc subunit on undecaprenyl-pyrophosphoryl-MurNAc-pentapeptide (lipid intermediate I) to form undecaprenyl-pyrophosphoryl-MurNAc-(pentapeptide)GlcNAc (lipid intermediate II). In Chlorobium phaeovibrioides (strain DSM 265 / 1930) (Prosthecochloris vibrioformis (strain DSM 265)), this protein is UDP-N-acetylglucosamine--N-acetylmuramyl-(pentapeptide) pyrophosphoryl-undecaprenol N-acetylglucosamine transferase.